The following is a 630-amino-acid chain: Elongation factor 4 (630 aa).

Positions 1 to 22 (MTVARNRAGAGPGKGSPISSFA) are disordered. Residues 30–211 (ARIRNFCIIA…EVVRQVPAPV (182 aa)) form the tr-type G domain. Residues 42–47 (DHGKST) and 158–161 (NKID) each bind GTP.

Belongs to the TRAFAC class translation factor GTPase superfamily. Classic translation factor GTPase family. LepA subfamily.

It localises to the cell membrane. It catalyses the reaction GTP + H2O = GDP + phosphate + H(+). Its function is as follows. Required for accurate and efficient protein synthesis under certain stress conditions. May act as a fidelity factor of the translation reaction, by catalyzing a one-codon backward translocation of tRNAs on improperly translocated ribosomes. Back-translocation proceeds from a post-translocation (POST) complex to a pre-translocation (PRE) complex, thus giving elongation factor G a second chance to translocate the tRNAs correctly. Binds to ribosomes in a GTP-dependent manner. The chain is Elongation factor 4 from Rhodococcus opacus (strain B4).